The chain runs to 1947 residues: Sodium channel protein type 3 subunit alpha (1947 aa).

Over 1–128 (MAQALLVPPG…KIAIKILVHS (128 aa)) the chain is Cytoplasmic. The disordered stretch occupies residues 28–60 (RAAEEKAKKPKKEQDIDDENKPKPNSDLEAGKN). The span at 46–57 (ENKPKPNSDLEA) shows a compositional bias: basic and acidic residues. The I repeat unit spans residues 110 to 455 (ILTPLNPVRK…QQMLEQLKKQ (346 aa)). Residues 129-146 (LFSMLIMCTILTNCVFMT) traverse the membrane as a helical segment. Residues 147–152 (LSNPPD) are Extracellular-facing. A helical membrane pass occupies residues 153-174 (WTKNVEYTFTGIYTFESLIKIL). Residues 175-188 (ARGFCLEDFTFLRD) lie on the Cytoplasmic side of the membrane. A helical membrane pass occupies residues 189-206 (PWNWLDFSVIVMAYVTEF). Topologically, residues 207-213 (VDLGNVS) are extracellular. Asparagine 211 carries N-linked (GlcNAc...) asparagine glycosylation. The chain crosses the membrane as a helical span at residues 214-235 (ALRTFRVLRALKTISVIPGLKT). Topologically, residues 236–249 (IVGALIQSVKKLSD) are cytoplasmic. Residues 250-269 (VMILTVFCLSVFALIGLQLF) traverse the membrane as a helical segment. The Extracellular segment spans residues 270-369 (MGNLRNKCLQ…NYGYTSFDTF (100 aa)). 5 N-linked (GlcNAc...) asparagine glycosylation sites follow: asparagine 290, asparagine 296, asparagine 302, asparagine 307, and asparagine 339. The segment at residues 370–386 (SWAFLSLFRLMTQDYWE) is an intramembrane region (pore-forming). Topologically, residues 387–397 (NLYQLTLRAAG) are extracellular. The chain crosses the membrane as a helical span at residues 398-424 (KTYMIFFVLVIFLGSFYLVNLILAVVA). The Cytoplasmic segment spans residues 425-712 (MAYEEQNQAT…LVNLIVMDPF (288 aa)). Residues serine 484, serine 485, and serine 486 each carry the phosphoserine modification. Disordered stretches follow at residues 493 to 529 (SKSA…SESE) and 587 to 632 (VGSE…ETEV). Over residues 500–509 (RNRRKKRRQR) the composition is skewed to basic residues. Composition is skewed to basic and acidic residues over residues 510 to 529 (EHLE…SESE) and 596 to 622 (DEHS…ERRN). An II repeat occupies 693 to 965 (CCDSWLKVKH…QIAVGRMQKG (273 aa)). Residues 713 to 730 (VDLAITICIVLNTLFMAM) form a helical membrane-spanning segment. Over 731 to 738 (EHYPMTEQ) the chain is Extracellular. A helical membrane pass occupies residues 739–763 (FSSVLTVGNLVFTGIFTAEMVLKII). At 764 to 773 (AMDPYYYFQE) the chain is on the cytoplasmic side. The helical transmembrane segment at 774 to 793 (GWNIFDGIIVSLSLMELGLA) threads the bilayer. Residues 794-797 (NVEG) lie on the Extracellular side of the membrane. Residues 798-816 (LSVLRSFRLLRVFKLAKSW) form a helical membrane-spanning segment. The Cytoplasmic segment spans residues 817 to 834 (PTLNMLIKIIGNSVGALG). The chain crosses the membrane as a helical span at residues 835-855 (NLTLVLAIIVFIFAVVGMQLF). The Extracellular portion of the chain corresponds to 856 to 880 (GKSYKECVCKINEDCKLPRWHMNDF). A disulfide bridge connects residues cysteine 864 and cysteine 870. The segment at residues 881–896 (FHSFLIVFRVLCGEWI) is an intramembrane region (pore-forming). Residues 897–907 (ETMWDCMEVAG) are Extracellular-facing. Cysteine 902 and cysteine 911 are oxidised to a cystine. Residues 908-934 (QTMCLIVFMLVMVIGNLVVLNLFLALL) form a helical membrane-spanning segment. Over 935–1157 (LSSFSSDNLA…RKTCYSIVEH (223 aa)) the chain is Cytoplasmic. Positions 1070–1113 (EEFSSESELEESKEKLNATSSSEGSTVDVAPPREGEQAEIEPEE) are disordered. One copy of the III repeat lies at 1140–1451 (KGKIWWNLRK…KKYYNAMKKL (312 aa)). Residues 1158–1178 (NWFETFIVFMILLSSGALAFE) traverse the membrane as a helical segment. The Extracellular segment spans residues 1179-1190 (DIYIEQRKTIKT). The chain crosses the membrane as a helical span at residues 1191–1212 (MLEYADKVFTYIFILEMLLKWV). The Cytoplasmic portion of the chain corresponds to 1213–1218 (AYGFQT). A helical membrane pass occupies residues 1219 to 1244 (YFTNAWCWLDFLIVDVSLVSLVANAL). Residues 1245–1253 (GYSELGAIK) lie on the Extracellular side of the membrane. A helical transmembrane segment spans residues 1254-1272 (SLRTLRALRPLRALSRFEG). Over 1273-1285 (MRVVVNALVGAIP) the chain is Cytoplasmic. A helical transmembrane segment spans residues 1286-1308 (SIMNVLLVCLIFWLIFSIMGVNL). Residues 1309-1354 (FAGKFYHCVNMTTGSMFDMSEVNNFSDCQALGKQARWKNVKVNFDN) lie on the Extracellular side of the membrane. A disulfide bridge links cysteine 1316 with cysteine 1336. N-linked (GlcNAc...) asparagine glycans are attached at residues asparagine 1318 and asparagine 1332. An intramembrane region (pore-forming) is located at residues 1355–1371 (VGAGYLALLQVATFKGW). Residues 1372–1394 (MDIMYAAVDSRDVKLQPVYEENL) lie on the Extracellular side of the membrane. A helical transmembrane segment spans residues 1395–1420 (YMYLYFVIFIIFGSFFTLNLFIGVII). The Cytoplasmic segment spans residues 1421–1478 (DNFNQQKKKFGGQDIFMTEEQKKYYNAMKKLGSKKPQKPIPRPANKFQGMVFDFVTRQ). Residue serine 1453 is modified to Phosphoserine. The IV repeat unit spans residues 1460–1758 (IPRPANKFQG…WEKFDPDATQ (299 aa)). Residues 1479–1497 (VFDISIMILICLNMVTMMV) traverse the membrane as a helical segment. Residues 1498-1505 (ETDDQSKY) lie on the Extracellular side of the membrane. The chain crosses the membrane as a helical span at residues 1506–1529 (MTLVLSRINLVFIVLFTGEFLLKL). Over 1530–1539 (ISLRYYYFTI) the chain is Cytoplasmic. A helical membrane pass occupies residues 1540–1557 (GWNIFDFVVVILSIVGMF). At 1558 to 1569 (LAELIEKYFVSP) the chain is on the extracellular side. Residues 1570 to 1592 (TLFRVIRLARIGRILRLIKGAKG) traverse the membrane as a helical segment. Over 1593 to 1605 (IRTLLFALMMSLP) the chain is Cytoplasmic. A helical transmembrane segment spans residues 1606 to 1629 (ALFNIGLLLFLVMFIYAIFGMSNF). Over 1630–1651 (AYVKKEAGIDDMFNFETFGNSM) the chain is Extracellular. An intramembrane region (pore-forming) is located at residues 1652–1664 (ICLFQITTSAGWD). Residues 1665–1696 (GLLAPILNSAPPDCDPDAIHPGSSVKGDCGNP) lie on the Extracellular side of the membrane. A helical membrane pass occupies residues 1697–1722 (SVGIFFFVSYIIISFLVVVNMYIAVI). Residues 1723–1947 (LENFSVATEE…PEKESKGKEV (225 aa)) lie on the Cytoplasmic side of the membrane. Residues 1852-1881 (EEVSAAIIQRNYRCYLLKQRLKNISNTYDK) enclose the IQ domain. The disordered stretch occupies residues 1901-1947 (LNGNSTPEKTDGSSSTTSPPSYDSVTKPDKEKFEKDKPEKESKGKEV). Residues 1926–1947 (TKPDKEKFEKDKPEKESKGKEV) are compositionally biased toward basic and acidic residues.

The protein belongs to the sodium channel (TC 1.A.1.10) family. Nav1.3/SCN3A subfamily. As to quaternary structure, heterooligomer of an alpha subunit, SCN3A, and 1 to 3 regulatory beta subunits including SCN1B and SCN2B; disulfide-linked with some beta subunits like SCN2B. Interacts with NEDD4L; could regulate expression of SCN3A at the plasma membrane through ubiquitination-regulated endocytosis. Post-translationally, may be ubiquitinated by NEDD4L; which would promote its endocytosis. Phosphorylation at Ser-1453 in a highly conserved cytoplasmic loop slows inactivation of the channel and reduces peak sodium currents. Expressed in enterochromaffin cells in both colon and small bowel (at protein level). Expressed in pancreatic alpha and beta cells.

The protein resides in the cell membrane. Its subcellular location is the basal cell membrane. It catalyses the reaction Na(+)(in) = Na(+)(out). Pore-forming subunit of Nav1.3, a voltage-gated sodium (Nav) channel that directly mediates the depolarizing phase of action potentials in excitable membranes. Navs, also called VGSCs (voltage-gated sodium channels) or VDSCs (voltage-dependent sodium channels), operate by switching between closed and open conformations depending on the voltage difference across the membrane. In the open conformation they allow Na(+) ions to selectively pass through the pore, along their electrochemical gradient. The influx of Na+ ions provokes membrane depolarization, initiating the propagation of electrical signals throughout cells and tissues. In some secretory cell types, it also participates in cell excitability through membrane depolarization and regulates cells responsiveness to stimuli triggering secretion. For instance, it controls the release of serotonin/5-hydroxytryptamine by enterochromaffin cells and is required for both glucagon- and glucose-induced insulin secretion in pancreatic endocrine cells. This chain is Sodium channel protein type 3 subunit alpha, found in Mus musculus (Mouse).